A 374-amino-acid chain; its full sequence is Secondary metabolism regulator laeA (374 aa).

The tract at residues 1 to 75 (MFEMGPVGTR…NRNGSPSMSP (75 aa)) is disordered. A compositionally biased stretch (polar residues) spans 23–40 (SYHSPTSSDRGRSRQNSD). An S-methylmethionine modification is found at methionine 207.

The protein belongs to the methyltransferase superfamily. LaeA methyltransferase family. Component of the heterotrimeric velvet complex composed of laeA, veA and velB; VeA acting as a bridging protein between laeA and velB. In terms of processing, self-methylates at Met-207.

The protein localises to the nucleus. It carries out the reaction L-methionyl-[protein] + S-adenosyl-L-methionine = S-methyl-L-methionyl-[protein] + S-adenosyl-L-homocysteine. Functionally, methyltransferase that performs automethylation at Met-207. No other methyl-accepting substrate has been identified yet. Component of the velvet transcription factor complex that acts as a global regulator for secondary metabolite gene expression. Controls the expression of the sterigmatocystin, penicillin, and lovastatin gene clusters. Controls light-dependent formation of the velB-vosA complex, veA protein modification, and is required for light-mediated inhibition of sexual development. Within the velvet complex, controls light-dependent secondary metabolism. Involved in the defense response against Drosophila melanogaster larval grazing. In Emericella nidulans (Aspergillus nidulans), this protein is Secondary metabolism regulator laeA.